Reading from the N-terminus, the 125-residue chain is Secreted RxLR effector protein RXLR-C13 (125 aa).

An N-terminal signal peptide occupies residues 1–23 (MVNSLTFTLVVVCLVRSCDGVAA). The short motif at 43–73 (RVLQETATANDDVKKLSTSTKVDSKLNQEIK) is the RxLR-dEER element. N85 carries N-linked (GlcNAc...) asparagine glycosylation. The helical transmembrane segment at 106–123 (FFILATILLFPIAAYMVA) threads the bilayer.

Belongs to the RxLR effector family.

The protein localises to the secreted. Its subcellular location is the host endoplasmic reticulum membrane. Its function is as follows. Secreted effector that does not suppress pattern-triggered immunity (PTI) in plant host. This Plasmopara halstedii (Downy mildew of sunflower) protein is Secreted RxLR effector protein RXLR-C13.